Consider the following 134-residue polypeptide: Phosphoribosyl-AMP cyclohydrolase (134 aa).

Position 80 (aspartate 80) interacts with Mg(2+). Zn(2+) is bound at residue cysteine 81. The Mg(2+) site is built by aspartate 82 and aspartate 84. Cysteine 98 and cysteine 105 together coordinate Zn(2+).

Belongs to the PRA-CH family. In terms of assembly, homodimer. Requires Mg(2+) as cofactor. Zn(2+) is required as a cofactor.

It is found in the cytoplasm. The catalysed reaction is 1-(5-phospho-beta-D-ribosyl)-5'-AMP + H2O = 1-(5-phospho-beta-D-ribosyl)-5-[(5-phospho-beta-D-ribosylamino)methylideneamino]imidazole-4-carboxamide. It participates in amino-acid biosynthesis; L-histidine biosynthesis; L-histidine from 5-phospho-alpha-D-ribose 1-diphosphate: step 3/9. Functionally, catalyzes the hydrolysis of the adenine ring of phosphoribosyl-AMP. In Janthinobacterium sp. (strain Marseille) (Minibacterium massiliensis), this protein is Phosphoribosyl-AMP cyclohydrolase.